Consider the following 42-residue polypeptide: Photosystem II reaction center protein J (42 aa).

The chain crosses the membrane as a helical span at residues 10 to 30 (IPLWLVGTVVGIAALTLLSVF).

This sequence belongs to the PsbJ family. As to quaternary structure, PSII is composed of 1 copy each of membrane proteins PsbA, PsbB, PsbC, PsbD, PsbE, PsbF, PsbH, PsbI, PsbJ, PsbK, PsbL, PsbM, PsbT, PsbX, PsbY, PsbZ, Psb30/Ycf12, at least 3 peripheral proteins of the oxygen-evolving complex and a large number of cofactors. It forms dimeric complexes.

The protein resides in the plastid. The protein localises to the chloroplast thylakoid membrane. Functionally, one of the components of the core complex of photosystem II (PSII). PSII is a light-driven water:plastoquinone oxidoreductase that uses light energy to abstract electrons from H(2)O, generating O(2) and a proton gradient subsequently used for ATP formation. It consists of a core antenna complex that captures photons, and an electron transfer chain that converts photonic excitation into a charge separation. In Tupiella akineta (Green alga), this protein is Photosystem II reaction center protein J.